The sequence spans 473 residues: Cucurbitadienol 11-hydroxylase (473 aa).

Residues 4–24 (VVLGLATLFVAYYIHWINKWR) traverse the membrane as a helical segment. Residue C422 coordinates heme.

It belongs to the cytochrome P450 family. Requires heme as cofactor. As to expression, highly expressed in young fruits 15 days after anthesis (15-DAA). Also observed in roots.

It localises to the membrane. It carries out the reaction cucurbitadienol + 2 reduced [NADPH--hemoprotein reductase] + 2 O2 = 11-oxocucurbitadienol + 2 oxidized [NADPH--hemoprotein reductase] + 3 H2O + 2 H(+). The catalysed reaction is cucurbitadienol + reduced [NADPH--hemoprotein reductase] + O2 = 11-hydroxycucurbitadienol + oxidized [NADPH--hemoprotein reductase] + H2O + H(+). It catalyses the reaction 11-hydroxycucurbitadienol + reduced [NADPH--hemoprotein reductase] + O2 = 11-oxocucurbitadienol + oxidized [NADPH--hemoprotein reductase] + 2 H2O + H(+). The enzyme catalyses (24R)-24,25-dihydroxycucurbitadienol + reduced [NADPH--hemoprotein reductase] + O2 = mogrol + oxidized [NADPH--hemoprotein reductase] + H2O + H(+). Its pathway is secondary metabolite biosynthesis; terpenoid biosynthesis. Functionally, hydroxylase involved in the biosynthesis of cucurbitacin and mogroside tetracyclic triterpene natural products (e.g. siamenoside I and mogrosides IV, V and VI). Cucurbitacins have cytotoxic properties and exhibit deterrent taste as a defense barrier against herbivores. Mogrosides are nonsugar highly oxygenated compounds used as high-intensity zero-calorie sweeteners; they also possess pharmacological properties such as regulating immunity, lowering blood sugar and lipid levels, protecting the liver, and acting as antioxidants and antitumor agents. Catalyzes the oxidation of cucurbitadienol at the C-11 position to produce 11-oxocucurbitadienol, a possible biosynthetic intermediate from cucurbitadienol to mogrol. Also mediates the conversion of 24,25-dihydroxycucurbitadienol to mogrol. This Siraitia grosvenorii (Monk's fruit) protein is Cucurbitadienol 11-hydroxylase.